The chain runs to 76 residues: Exodeoxyribonuclease 7 small subunit (76 aa).

It belongs to the XseB family. In terms of assembly, heterooligomer composed of large and small subunits.

The protein localises to the cytoplasm. The catalysed reaction is Exonucleolytic cleavage in either 5'- to 3'- or 3'- to 5'-direction to yield nucleoside 5'-phosphates.. Bidirectionally degrades single-stranded DNA into large acid-insoluble oligonucleotides, which are then degraded further into small acid-soluble oligonucleotides. The protein is Exodeoxyribonuclease 7 small subunit of Bacillus mycoides (strain KBAB4) (Bacillus weihenstephanensis).